The following is a 434-amino-acid chain: Nicotinate phosphoribosyltransferase (434 aa).

Position 242 is a phosphohistidine; by autocatalysis (His-242).

Belongs to the NAPRTase family. Post-translationally, transiently phosphorylated on a His residue during the reaction cycle. Phosphorylation strongly increases the affinity for substrates and increases the rate of nicotinate D-ribonucleotide production. Dephosphorylation regenerates the low-affinity form of the enzyme, leading to product release.

It catalyses the reaction nicotinate + 5-phospho-alpha-D-ribose 1-diphosphate + ATP + H2O = nicotinate beta-D-ribonucleotide + ADP + phosphate + diphosphate. Its pathway is cofactor biosynthesis; NAD(+) biosynthesis; nicotinate D-ribonucleotide from nicotinate: step 1/1. Functionally, catalyzes the synthesis of beta-nicotinate D-ribonucleotide from nicotinate and 5-phospho-D-ribose 1-phosphate at the expense of ATP. The sequence is that of Nicotinate phosphoribosyltransferase from Bradyrhizobium sp. (strain BTAi1 / ATCC BAA-1182).